The chain runs to 205 residues: ATP phosphoribosyltransferase (205 aa).

This sequence belongs to the ATP phosphoribosyltransferase family. Short subfamily. Heteromultimer composed of HisG and HisZ subunits.

The protein resides in the cytoplasm. The catalysed reaction is 1-(5-phospho-beta-D-ribosyl)-ATP + diphosphate = 5-phospho-alpha-D-ribose 1-diphosphate + ATP. It functions in the pathway amino-acid biosynthesis; L-histidine biosynthesis; L-histidine from 5-phospho-alpha-D-ribose 1-diphosphate: step 1/9. Catalyzes the condensation of ATP and 5-phosphoribose 1-diphosphate to form N'-(5'-phosphoribosyl)-ATP (PR-ATP). Has a crucial role in the pathway because the rate of histidine biosynthesis seems to be controlled primarily by regulation of HisG enzymatic activity. This chain is ATP phosphoribosyltransferase, found in Nitratiruptor sp. (strain SB155-2).